The primary structure comprises 212 residues: uncharacterized protein (212 aa).

This is an uncharacterized protein from Acanthamoeba polyphaga (Amoeba).